The primary structure comprises 281 residues: NADPH-dependent 7-cyano-7-deazaguanine reductase (281 aa).

87–89 provides a ligand contact to substrate; sequence IES. An NADPH-binding site is contributed by 89-90; that stretch reads SK. C188 acts as the Thioimide intermediate in catalysis. The Proton donor role is filled by D195. 227-228 contacts substrate; that stretch reads HE. 256 to 257 lines the NADPH pocket; that stretch reads RG. A disordered region spans residues 261–281; sequence INPYRSTEQDKPAHNHRMARQ.

The protein belongs to the GTP cyclohydrolase I family. QueF type 2 subfamily. Homodimer.

Its subcellular location is the cytoplasm. It carries out the reaction 7-aminomethyl-7-carbaguanine + 2 NADP(+) = 7-cyano-7-deazaguanine + 2 NADPH + 3 H(+). It functions in the pathway tRNA modification; tRNA-queuosine biosynthesis. In terms of biological role, catalyzes the NADPH-dependent reduction of 7-cyano-7-deazaguanine (preQ0) to 7-aminomethyl-7-deazaguanine (preQ1). This chain is NADPH-dependent 7-cyano-7-deazaguanine reductase, found in Vibrio parahaemolyticus serotype O3:K6 (strain RIMD 2210633).